We begin with the raw amino-acid sequence, 244 residues long: Ribosomal RNA small subunit methyltransferase NEP1 (244 aa).

Residues 1–34 (MAAPSDGFKPRERSGGEQAQDWDALPPKRPRLGA) form a disordered region. Residue Ala2 is modified to N-acetylalanine. Phosphoserine occurs at positions 5 and 14. Residues Thr176, Gly201, Gly206, and 219-224 (ISNYPL) each bind S-adenosyl-L-methionine.

It belongs to the class IV-like SAM-binding methyltransferase superfamily. RNA methyltransferase NEP1 family. In terms of assembly, homodimer. Part of the small subunit (SSU) processome, composed of more than 70 proteins and the RNA chaperone small nucleolar RNA (snoRNA) U3.

The protein resides in the nucleus. Its subcellular location is the nucleolus. The catalysed reaction is pseudouridine(1248) in human 18S rRNA + S-adenosyl-L-methionine = N(1)-methylpseudouridine(1248) in human 18S rRNA + S-adenosyl-L-homocysteine + H(+). In terms of biological role, S-adenosyl-L-methionine-dependent pseudouridine N(1)-methyltransferase that methylates pseudouridine at position 1248 (Psi1248) in 18S rRNA. Involved the biosynthesis of the hypermodified N1-methyl-N3-(3-amino-3-carboxypropyl) pseudouridine (m1acp3-Psi) conserved in eukaryotic 18S rRNA. Is not able to methylate uridine at this position. Also has an essential role in 40S ribosomal subunit biogenesis independent on its methyltransferase activity, facilitating the incorporation of ribosomal protein S19 during the formation of pre-ribosomes. Part of the small subunit (SSU) processome, first precursor of the small eukaryotic ribosomal subunit. During the assembly of the SSU processome in the nucleolus, many ribosome biogenesis factors, an RNA chaperone and ribosomal proteins associate with the nascent pre-rRNA and work in concert to generate RNA folding, modifications, rearrangements and cleavage as well as targeted degradation of pre-ribosomal RNA by the RNA exosome. The chain is Ribosomal RNA small subunit methyltransferase NEP1 from Homo sapiens (Human).